A 261-amino-acid polypeptide reads, in one-letter code: Thiazole synthase (261 aa).

The active-site Schiff-base intermediate with DXP is the lysine 102. Residues glycine 163, 189–190 (AG), and 211–212 (NT) each bind 1-deoxy-D-xylulose 5-phosphate.

Belongs to the ThiG family. Homotetramer. Forms heterodimers with either ThiH or ThiS.

The protein resides in the cytoplasm. It catalyses the reaction [ThiS sulfur-carrier protein]-C-terminal-Gly-aminoethanethioate + 2-iminoacetate + 1-deoxy-D-xylulose 5-phosphate = [ThiS sulfur-carrier protein]-C-terminal Gly-Gly + 2-[(2R,5Z)-2-carboxy-4-methylthiazol-5(2H)-ylidene]ethyl phosphate + 2 H2O + H(+). It participates in cofactor biosynthesis; thiamine diphosphate biosynthesis. Its function is as follows. Catalyzes the rearrangement of 1-deoxy-D-xylulose 5-phosphate (DXP) to produce the thiazole phosphate moiety of thiamine. Sulfur is provided by the thiocarboxylate moiety of the carrier protein ThiS. In vitro, sulfur can be provided by H(2)S. This is Thiazole synthase from Myxococcus xanthus (strain DK1622).